The primary structure comprises 208 residues: MGRAHTVSRGEDHPPIARSELPDDTAALARYLIGKLVVRDLPEGMVSGRIVETEAYVVGDAAGHGFRGMTPRNRSLFLERGHAYVYLAYGVSMMLNVSSEVPGIGTGVLIRALEPLDGIEIMRRNRGVERLRDLARGPGRLAAALRIDRSLDGLDLCRKGPLWLAKDNQKPGEIGQSTRIGITKDAARLLRFYVRGSLFVSGPRSLQE.

Residues 1-20 (MGRAHTVSRGEDHPPIARSE) form a disordered region.

It belongs to the DNA glycosylase MPG family.

The polypeptide is Putative 3-methyladenine DNA glycosylase (Mesorhizobium japonicum (strain LMG 29417 / CECT 9101 / MAFF 303099) (Mesorhizobium loti (strain MAFF 303099))).